Here is a 69-residue protein sequence, read N- to C-terminus: uncharacterized protein (69 aa).

This is an uncharacterized protein from Salmonella paratyphi A (strain ATCC 9150 / SARB42).